Reading from the N-terminus, the 123-residue chain is Ribonuclease P protein component (123 aa).

The protein belongs to the RnpA family. In terms of assembly, consists of a catalytic RNA component (M1 or rnpB) and a protein subunit.

It catalyses the reaction Endonucleolytic cleavage of RNA, removing 5'-extranucleotides from tRNA precursor.. Functionally, RNaseP catalyzes the removal of the 5'-leader sequence from pre-tRNA to produce the mature 5'-terminus. It can also cleave other RNA substrates such as 4.5S RNA. The protein component plays an auxiliary but essential role in vivo by binding to the 5'-leader sequence and broadening the substrate specificity of the ribozyme. In Herpetosiphon aurantiacus (strain ATCC 23779 / DSM 785 / 114-95), this protein is Ribonuclease P protein component.